Here is a 250-residue protein sequence, read N- to C-terminus: Pre-protein VI (250 aa).

A propeptide spanning residues 1–33 (MEDINFASLAPRHGSRPFMGNWQDIGTSNMSGG) is cleaved from the precursor. An amphipathic alpha-helix essential for membrane lytic activity region spans residues 34 to 54 (AFSWGSLWSGIKNFGSTVKNY). Positions 36–53 (SWGSLWSGIKNFGSTVKN) are involved in endosomal membrane lysis. Positions 48–74 (GSTVKNYGSKAWNSSTGQMLRDKLKEQ) are interaction with hexon protein. A Nuclear export signal motif is present at residues 67–76 (LRDKLKEQNF). A disordered region spans residues 103–148 (INSKLDPRPPVEEPPPAVETVSPEGRGEKRPRPDREETLVTQIDEP). A Phosphoserine; by host modification is found at S124. A compositionally biased stretch (basic and acidic residues) spans 127-140 (GRGEKRPRPDREET). Positions 131–135 (KRPRP) match the Nuclear localization signal motif. The residue at position 143 (T143) is a Phosphothreonine; by host. Positions 148–151 (PPSY) match the PPXY motif motif. The Nuclear export signal signature appears at 231-242 (STLNSIVGLGVQ). The interaction with hexon protein stretch occupies residues 233 to 239 (LNSIVGL). Residues 240–250 (GVQSLKRRRCF) are binds to importin alpha/beta, involved in hexon nuclear import. The Nuclear localization signal motif lies at 245-248 (KRRR).

Belongs to the adenoviridae protein VI family. As to quaternary structure, interacts with hexon protein; this interaction allows nuclear import of hexon trimers and possibly pre-capsid assembly. Interacts (via C-terminal NLS) with importin alpha/beta. Interacts (via PPxY motif) with host NEDD4 ubiquitine ligase; this interaction might play a role in virus intracellular transport during entry. Part of a complex composed of the core-capsid bridging protein, the endosome lysis protein VI and the hexon-linking protein VIII; these interactions bridge the virus core to the capsid. Interacts with peripentonal hexons; this interaction stabilizes the capsid by gluing two peripentonal hexons together and joining them with an adjacent group-of-nine hexon. In terms of assembly, heterodimer with the viral protease; disulfide-linked. Interacts with the viral protease. Ubiquitinated by Nedd4 following partial capsid disassembly; which might play a role in intracellular virus movement during entry. Post-translationally, contains the major nuclear import and export signals. Proteolytically removed during virion maturation. The processing of the C-terminus turns the precursor into a mature viral structural protein and abrogates its ability to promote hexon import and act as a potential chaperone protein.

It is found in the host nucleus. The protein localises to the host cytoplasm. It localises to the virion. Its function is as follows. During virus assembly, promotes hexon trimers nuclear import through nuclear pore complexes via an importin alpha/beta-dependent mechanism. By analogy to herpesviruses capsid assembly, might act as a chaperone to promote the formation of the icosahedral capsid. In terms of biological role, structural component of the virion that provides increased stability to the particle shell through its interaction with the core-capsid bridging protein and the hexon-linking protein VIII. Fibers shedding during virus entry into host cell allows the endosome lysis protein to be exposed as a membrane-lytic peptide. Exhibits pH-independent membrane fragmentation activity and probably mediates viral rapid escape from host endosome via organellar membrane lysis. It is not clear if it then remains partially associated with the capsid and involved in the intracellular microtubule-dependent transport of capsid to the nucleus, or if it is lost during endosomal penetration. Functionally, cofactor that activates the viral protease. Binds to viral protease in a 1:1 ratio. This chain is Pre-protein VI, found in Homo sapiens (Human).